The sequence spans 540 residues: Chaperonin GroEL (540 aa).

ATP is bound by residues 29-32 (TLGP), 86-90 (DGTTT), glycine 413, and aspartate 493. A disordered region spans residues 520–540 (AEKPEPKPAPGPADPGAGMDF).

It belongs to the chaperonin (HSP60) family. In terms of assembly, forms a cylinder of 14 subunits composed of two heptameric rings stacked back-to-back. Interacts with the co-chaperonin GroES.

Its subcellular location is the cytoplasm. The catalysed reaction is ATP + H2O + a folded polypeptide = ADP + phosphate + an unfolded polypeptide.. Functionally, together with its co-chaperonin GroES, plays an essential role in assisting protein folding. The GroEL-GroES system forms a nano-cage that allows encapsulation of the non-native substrate proteins and provides a physical environment optimized to promote and accelerate protein folding. The sequence is that of Chaperonin GroEL from Tropheryma whipplei (strain TW08/27) (Whipple's bacillus).